Consider the following 524-residue polypeptide: Glutamyl-tRNA(Gln) amidotransferase subunit A (524 aa).

Residues Lys-109 and Ser-184 each act as charge relay system in the active site. Catalysis depends on Ser-208, which acts as the Acyl-ester intermediate.

The protein belongs to the amidase family. GatA subfamily. As to quaternary structure, heterotrimer of A, B and C subunits.

It carries out the reaction L-glutamyl-tRNA(Gln) + L-glutamine + ATP + H2O = L-glutaminyl-tRNA(Gln) + L-glutamate + ADP + phosphate + H(+). Its function is as follows. Allows the formation of correctly charged Gln-tRNA(Gln) through the transamidation of misacylated Glu-tRNA(Gln) in organisms which lack glutaminyl-tRNA synthetase. The reaction takes place in the presence of glutamine and ATP through an activated gamma-phospho-Glu-tRNA(Gln). This Tropheryma whipplei (strain TW08/27) (Whipple's bacillus) protein is Glutamyl-tRNA(Gln) amidotransferase subunit A.